Consider the following 483-residue polypeptide: Glutamyl-tRNA(Gln) amidotransferase subunit A (483 aa).

Catalysis depends on charge relay system residues Lys-76 and Ser-151. Catalysis depends on Ser-175, which acts as the Acyl-ester intermediate.

This sequence belongs to the amidase family. GatA subfamily. Heterotrimer of A, B and C subunits.

It carries out the reaction L-glutamyl-tRNA(Gln) + L-glutamine + ATP + H2O = L-glutaminyl-tRNA(Gln) + L-glutamate + ADP + phosphate + H(+). In terms of biological role, allows the formation of correctly charged Gln-tRNA(Gln) through the transamidation of misacylated Glu-tRNA(Gln) in organisms which lack glutaminyl-tRNA synthetase. The reaction takes place in the presence of glutamine and ATP through an activated gamma-phospho-Glu-tRNA(Gln). The chain is Glutamyl-tRNA(Gln) amidotransferase subunit A from Nitrosospira multiformis (strain ATCC 25196 / NCIMB 11849 / C 71).